A 194-amino-acid polypeptide reads, in one-letter code: Holliday junction branch migration complex subunit RuvA (194 aa).

The interval 1–64 (MISRLTGKLV…EDAHLLFGFA (64 aa)) is domain I. The tract at residues 65 to 143 (TAEERKTFRQ…AHAVTDGLFA (79 aa)) is domain II. The interval 144–147 (AAPA) is flexible linker. A domain III region spans residues 147–194 (AADETEDIVGTLLALGYSEREAKAAVKGVPEGTDVGEGVRLALKNLLK).

This sequence belongs to the RuvA family. Homotetramer. Forms an RuvA(8)-RuvB(12)-Holliday junction (HJ) complex. HJ DNA is sandwiched between 2 RuvA tetramers; dsDNA enters through RuvA and exits via RuvB. An RuvB hexamer assembles on each DNA strand where it exits the tetramer. Each RuvB hexamer is contacted by two RuvA subunits (via domain III) on 2 adjacent RuvB subunits; this complex drives branch migration. In the full resolvosome a probable DNA-RuvA(4)-RuvB(12)-RuvC(2) complex forms which resolves the HJ.

Its subcellular location is the cytoplasm. In terms of biological role, the RuvA-RuvB-RuvC complex processes Holliday junction (HJ) DNA during genetic recombination and DNA repair, while the RuvA-RuvB complex plays an important role in the rescue of blocked DNA replication forks via replication fork reversal (RFR). RuvA specifically binds to HJ cruciform DNA, conferring on it an open structure. The RuvB hexamer acts as an ATP-dependent pump, pulling dsDNA into and through the RuvAB complex. HJ branch migration allows RuvC to scan DNA until it finds its consensus sequence, where it cleaves and resolves the cruciform DNA. This chain is Holliday junction branch migration complex subunit RuvA, found in Neisseria meningitidis serogroup A / serotype 4A (strain DSM 15465 / Z2491).